Consider the following 444-residue polypeptide: Type VII secretion system protein EssB (444 aa).

At 1–229 (MVKNHDPKNE…RKVGHTVFKW (229 aa)) the chain is on the cytoplasmic side. The helical transmembrane segment at 230–250 (VAIGMTTLSVLLIAFLAFLYF) threads the bilayer. Topologically, residues 251-444 (SVMKHNERIE…EKRQEAERKK (194 aa)) are extracellular. The interval 366 to 444 (KNNGDLSNDK…EKRQEAERKK (79 aa)) is disordered. Basic and acidic residues predominate over residues 372–444 (SNDKRSEETK…EKRQEAERKK (73 aa)). Residues 387–443 (LQDILDKEKQVKDEKAKSEEEKAKAKDEKLKQQEENEKKQKEQAQKDKEKRQEAERK) adopt a coiled-coil conformation.

Belongs to the EssB family.

Its subcellular location is the cell membrane. In terms of biological role, component of the type VII secretion system (Ess). Required for the secretion of EsxA. The sequence is that of Type VII secretion system protein EssB from Staphylococcus aureus (strain MRSA252).